Consider the following 96-residue polypeptide: MAQISVTPEELKSQAQVYIQSKEEIDQAIQKVNSMNSTIAEEWKGQAFQAYLEQYNQLHQTVVQFENLLESVNQQLNKYADTVAERDAQDAQSFGF.

The stretch at 9–86 (EELKSQAQVY…NKYADTVAER (78 aa)) forms a coiled coil.

The protein belongs to the WXG100 family. sagEsxA-like subfamily.

This is an uncharacterized protein from Clostridium acetobutylicum (strain ATCC 824 / DSM 792 / JCM 1419 / IAM 19013 / LMG 5710 / NBRC 13948 / NRRL B-527 / VKM B-1787 / 2291 / W).